We begin with the raw amino-acid sequence, 307 residues long: Fructokinase (307 aa).

Belongs to the carbohydrate kinase PfkB family.

It catalyses the reaction D-fructose + ATP = D-fructose 6-phosphate + ADP + H(+). The sequence is that of Fructokinase (cscK) from Escherichia coli.